A 190-amino-acid chain; its full sequence is NADH-quinone oxidoreductase subunit B (190 aa).

Positions 39, 40, 104, and 135 each coordinate [4Fe-4S] cluster.

This sequence belongs to the complex I 20 kDa subunit family. As to quaternary structure, NDH-1 is composed of 14 different subunits. Subunits NuoB, C, D, E, F, and G constitute the peripheral sector of the complex. Requires [4Fe-4S] cluster as cofactor.

Its subcellular location is the cell inner membrane. The enzyme catalyses a quinone + NADH + 5 H(+)(in) = a quinol + NAD(+) + 4 H(+)(out). Functionally, NDH-1 shuttles electrons from NADH, via FMN and iron-sulfur (Fe-S) centers, to quinones in the respiratory chain. The immediate electron acceptor for the enzyme in this species is believed to be a menaquinone. Couples the redox reaction to proton translocation (for every two electrons transferred, four hydrogen ions are translocated across the cytoplasmic membrane), and thus conserves the redox energy in a proton gradient. The sequence is that of NADH-quinone oxidoreductase subunit B from Prosthecochloris aestuarii (strain DSM 271 / SK 413).